The following is a 253-amino-acid chain: NAD-dependent protein deacylase 2 (253 aa).

The 252-residue stretch at 1–252 folds into the Deacetylase sirtuin-type domain; sequence MEDEIRKAAE…VEEVKRLRSE (252 aa). Residues 23-42 and 100-103 contribute to the NAD(+) site; these read GAGI…DGLW and QNID. His-118 (proton acceptor) is an active-site residue. Zn(2+)-binding residues include Cys-126, Cys-129, Cys-150, and Cys-153. Residues 191–193, 217–219, and Ala-235 each bind NAD(+); these read GSS and NAE.

Belongs to the sirtuin family. Class III subfamily. Zn(2+) serves as cofactor.

The protein resides in the cytoplasm. It carries out the reaction N(6)-acetyl-L-lysyl-[protein] + NAD(+) + H2O = 2''-O-acetyl-ADP-D-ribose + nicotinamide + L-lysyl-[protein]. Its function is as follows. NAD-dependent protein deacetylase which modulates the activities of several proteins which are inactive in their acetylated form. Deacetylates the N-terminal lysine residue of Alba, the major archaeal chromatin protein and that, in turn, increases Alba's DNA binding affinity, thereby repressing transcription. The polypeptide is NAD-dependent protein deacylase 2 (Archaeoglobus fulgidus (strain ATCC 49558 / DSM 4304 / JCM 9628 / NBRC 100126 / VC-16)).